The sequence spans 581 residues: Proline--tRNA ligase (581 aa).

Belongs to the class-II aminoacyl-tRNA synthetase family. ProS type 1 subfamily. In terms of assembly, homodimer.

It localises to the cytoplasm. The catalysed reaction is tRNA(Pro) + L-proline + ATP = L-prolyl-tRNA(Pro) + AMP + diphosphate. Functionally, catalyzes the attachment of proline to tRNA(Pro) in a two-step reaction: proline is first activated by ATP to form Pro-AMP and then transferred to the acceptor end of tRNA(Pro). As ProRS can inadvertently accommodate and process non-cognate amino acids such as alanine and cysteine, to avoid such errors it has two additional distinct editing activities against alanine. One activity is designated as 'pretransfer' editing and involves the tRNA(Pro)-independent hydrolysis of activated Ala-AMP. The other activity is designated 'posttransfer' editing and involves deacylation of mischarged Ala-tRNA(Pro). The misacylated Cys-tRNA(Pro) is not edited by ProRS. This Leptothrix cholodnii (strain ATCC 51168 / LMG 8142 / SP-6) (Leptothrix discophora (strain SP-6)) protein is Proline--tRNA ligase.